A 500-amino-acid polypeptide reads, in one-letter code: Zinc finger and BTB domain-containing protein 34 (500 aa).

In terms of domain architecture, BTB spans 32–96; the sequence is CDIIVHIQGQ…CYTGRMSLQL (65 aa). At serine 164 the chain carries Phosphoserine. Residues 164-209 form a disordered region; the sequence is SPPYCSQGRQPTASSDLRMETTPSKALRSRLQEEGHSDRGSSGSVS. Basic and acidic residues predominate over residues 193 to 202; that stretch reads RLQEEGHSDR. Glycyl lysine isopeptide (Lys-Gly) (interchain with G-Cter in SUMO2) cross-links involve residues lysine 235 and lysine 237. Basic and acidic residues predominate over residues 236–245; it reads VKMEKSDRPS. Disordered regions lie at residues 236–256 and 341–360; these read VKME…GDDG and SDSE…RERS. C2H2-type zinc fingers lie at residues 372–394 and 400–422; these read LICI…MRLH and FVCK…IRGH. A Glycyl lysine isopeptide (Lys-Gly) (interchain with G-Cter in SUMO2) cross-link involves residue lysine 426. The C2H2-type 3 zinc finger occupies 428–451; it reads FRCEICGKCFPFQGTLNQHLRKNH. Serine 463 carries the post-translational modification Phosphoserine. Residue lysine 474 forms a Glycyl lysine isopeptide (Lys-Gly) (interchain with G-Cter in SUMO2) linkage. A disordered region spans residues 478–500; that stretch reads DASASEMGLDSRMEIHTVSDAPD.

In terms of tissue distribution, expressed in several tissues, including heart, brain, thymus, skeletal muscle, small intestine, testis, kidney, placenta, peripheral blood cells and adult and fetal liver.

It localises to the nucleus. Its function is as follows. May be a transcriptional repressor. The chain is Zinc finger and BTB domain-containing protein 34 (ZBTB34) from Homo sapiens (Human).